The following is a 329-amino-acid chain: Cathepsin K (329 aa).

Residues 1–15 (MWGLKVLLLPVVSFA) form the signal peptide. The propeptide at 16 to 114 (LYPEEILDTH…TLYIPEWEGR (99 aa)) is activation peptide. Residue asparagine 103 is glycosylated (N-linked (GlcNAc...) asparagine). Intrachain disulfides connect cysteine 136–cysteine 177, cysteine 170–cysteine 210, and cysteine 269–cysteine 318. Residue cysteine 139 is part of the active site. Active-site residues include histidine 276 and asparagine 296.

It belongs to the peptidase C1 family. In terms of tissue distribution, predominantly expressed in osteoclasts (bones). Expressed in thyroid epithelial cells.

It is found in the lysosome. Its subcellular location is the secreted. The protein resides in the apical cell membrane. It catalyses the reaction Broad proteolytic activity. With small-molecule substrates and inhibitors, the major determinant of specificity is P2, which is preferably Leu, Met &gt; Phe, and not Arg.. Its function is as follows. Thiol protease involved in osteoclastic bone resorption and may participate partially in the disorder of bone remodeling. Displays potent endoprotease activity against fibrinogen at acid pH. May play an important role in extracellular matrix degradation. Involved in the release of thyroid hormone thyroxine (T4) by limited proteolysis of TG/thyroglobulin in the thyroid follicle lumen. In Homo sapiens (Human), this protein is Cathepsin K (CTSK).